Here is a 363-residue protein sequence, read N- to C-terminus: 3-isopropylmalate dehydrogenase (363 aa).

G77–E90 lines the NAD(+) pocket. Positions 98, 108, 137, and 226 each coordinate substrate. Residues D226, D250, and D254 each contribute to the Mg(2+) site. G284 to N296 contacts NAD(+).

The protein belongs to the isocitrate and isopropylmalate dehydrogenases family. LeuB type 1 subfamily. In terms of assembly, homodimer. Mg(2+) is required as a cofactor. Mn(2+) serves as cofactor.

It is found in the cytoplasm. It catalyses the reaction (2R,3S)-3-isopropylmalate + NAD(+) = 4-methyl-2-oxopentanoate + CO2 + NADH. It functions in the pathway amino-acid biosynthesis; L-leucine biosynthesis; L-leucine from 3-methyl-2-oxobutanoate: step 3/4. Catalyzes the oxidation of 3-carboxy-2-hydroxy-4-methylpentanoate (3-isopropylmalate) to 3-carboxy-4-methyl-2-oxopentanoate. The product decarboxylates to 4-methyl-2 oxopentanoate. This Buchnera aphidicola subsp. Pemphigus spyrothecae protein is 3-isopropylmalate dehydrogenase.